A 381-amino-acid chain; its full sequence is tRNA N6-adenosine threonylcarbamoyltransferase (381 aa).

Residues His-114 and His-118 each contribute to the Fe cation site. Residues 142–146, Asp-178, Gly-191, Asp-195, and Asn-321 each bind substrate; that span reads VVSGG. Asp-349 is a binding site for Fe cation.

It belongs to the KAE1 / TsaD family. Fe(2+) serves as cofactor.

The protein resides in the cytoplasm. The enzyme catalyses L-threonylcarbamoyladenylate + adenosine(37) in tRNA = N(6)-L-threonylcarbamoyladenosine(37) in tRNA + AMP + H(+). In terms of biological role, required for the formation of a threonylcarbamoyl group on adenosine at position 37 (t(6)A37) in tRNAs that read codons beginning with adenine. Is involved in the transfer of the threonylcarbamoyl moiety of threonylcarbamoyl-AMP (TC-AMP) to the N6 group of A37, together with TsaE and TsaB. TsaD likely plays a direct catalytic role in this reaction. The sequence is that of tRNA N6-adenosine threonylcarbamoyltransferase from Koribacter versatilis (strain Ellin345).